We begin with the raw amino-acid sequence, 261 residues long: tRNA U34 carboxymethyltransferase (261 aa).

Carboxy-S-adenosyl-L-methionine contacts are provided by residues Lys-25, Trp-39, Lys-44, Gly-63, 114–115 (VE), Tyr-135, and Arg-250.

This sequence belongs to the class I-like SAM-binding methyltransferase superfamily. CmoB family. Homotetramer.

The catalysed reaction is carboxy-S-adenosyl-L-methionine + 5-hydroxyuridine(34) in tRNA = 5-carboxymethoxyuridine(34) in tRNA + S-adenosyl-L-homocysteine + H(+). Its function is as follows. Catalyzes carboxymethyl transfer from carboxy-S-adenosyl-L-methionine (Cx-SAM) to 5-hydroxyuridine (ho5U) to form 5-carboxymethoxyuridine (cmo5U) at position 34 in tRNAs. This is tRNA U34 carboxymethyltransferase from Helicobacter pylori (strain ATCC 700392 / 26695) (Campylobacter pylori).